Reading from the N-terminus, the 361-residue chain is G kinase-anchoring protein 1-A (361 aa).

Disordered regions lie at residues 22 to 111 (DSSS…EDWQ) and 140 to 183 (FEES…KDFQ). Residues 35-48 (AHSSGKAHSGSAAR) are compositionally biased toward low complexity. A coiled-coil region spans residues 51-79 (NKGNEKKKEKRRKKKEQQQSEANELRNLA). The span at 158 to 168 (KVNKKDKRKNN) shows a compositional bias: basic residues. 2 coiled-coil regions span residues 246-296 (KDGR…QEGE) and 326-346 (AALE…VKYQ).

Belongs to the GKAP1 family.

Its subcellular location is the golgi apparatus. May play a role in the regulation of insulin-dependent IRS1 tyrosine phosphorylation in adipocytes. This chain is G kinase-anchoring protein 1-A (gkap1-a), found in Xenopus laevis (African clawed frog).